A 352-amino-acid polypeptide reads, in one-letter code: C-glycoside deglycosidase alpha subunit (352 aa).

Glu147 serves as a coordination point for Mn(2+). His149 functions as the Proton acceptor in the catalytic mechanism. The Mn(2+) site is built by Asp179, His269, and Glu305.

This sequence belongs to the C-glycoside deglycosidase alpha subunit family. As to quaternary structure, heterodimer composed of an alpha subunit (CarB2) and a beta subunit (CarC2). It depends on a divalent metal cation as a cofactor.

It carries out the reaction 3''-dehydroorientin = 1,5-anhydro-D-erythro-hex-1-en-3-ulose + luteolin. With respect to regulation, activity is strongly reduced in the presence of chelating agents. Functionally, carbon-carbon bond-cleaving enzyme which participates in the metabolism of C-glycosides. Acts on the C8-glycosylated compound 3''-dehydroorientin (3''-oxo-orientin). The polypeptide is C-glycoside deglycosidase alpha subunit (Arthrobacter globiformis (strain ATCC 8010 / DSM 20124 / JCM 1332 / NBRC 12137 / NCIMB 8907 / NRRL B-2979 / 168)).